We begin with the raw amino-acid sequence, 161 residues long: Phosphopantetheine adenylyltransferase (161 aa).

Ser9 provides a ligand contact to substrate. Residues 9-10 (SF) and His17 each bind ATP. Residues Lys41, Leu73, and Arg87 each coordinate substrate. Residues 88 to 90 (GIR), Glu98, and 123 to 129 (TGFISST) each bind ATP.

This sequence belongs to the bacterial CoaD family. Homohexamer. Requires Mg(2+) as cofactor.

Its subcellular location is the cytoplasm. The enzyme catalyses (R)-4'-phosphopantetheine + ATP + H(+) = 3'-dephospho-CoA + diphosphate. It functions in the pathway cofactor biosynthesis; coenzyme A biosynthesis; CoA from (R)-pantothenate: step 4/5. Its function is as follows. Reversibly transfers an adenylyl group from ATP to 4'-phosphopantetheine, yielding dephospho-CoA (dPCoA) and pyrophosphate. In Psychromonas ingrahamii (strain DSM 17664 / CCUG 51855 / 37), this protein is Phosphopantetheine adenylyltransferase.